A 436-amino-acid chain; its full sequence is GTPase Der (436 aa).

2 EngA-type G domains span residues Pro-4–Glu-167 and Ile-175–Asn-351. GTP is bound by residues Gly-10–Ser-17, Asp-57–Ile-61, Asn-119–Asp-122, Gly-181–Ser-188, Asp-229–Met-233, and Asn-294–Asp-297. Positions Lys-352–Lys-436 constitute a KH-like domain.

Belongs to the TRAFAC class TrmE-Era-EngA-EngB-Septin-like GTPase superfamily. EngA (Der) GTPase family. In terms of assembly, associates with the 50S ribosomal subunit.

In terms of biological role, GTPase that plays an essential role in the late steps of ribosome biogenesis. The chain is GTPase Der from Streptococcus pyogenes serotype M28 (strain MGAS6180).